Reading from the N-terminus, the 277-residue chain is Small ribosomal subunit protein uS5 (277 aa).

Residues Ala-18–Ala-40 are disordered. Positions Pro-29 to Ala-40 are enriched in basic and acidic residues. Residues Leu-87–Val-150 form the S5 DRBM domain.

Belongs to the universal ribosomal protein uS5 family. As to quaternary structure, component of the small ribosomal subunit.

The protein resides in the cytoplasm. It is found in the nucleus. The protein localises to the nucleolus. Component of the ribosome, a large ribonucleoprotein complex responsible for the synthesis of proteins in the cell. The small ribosomal subunit (SSU) binds messenger RNAs (mRNAs) and translates the encoded message by selecting cognate aminoacyl-transfer RNA (tRNA) molecules. The large subunit (LSU) contains the ribosomal catalytic site termed the peptidyl transferase center (PTC), which catalyzes the formation of peptide bonds, thereby polymerizing the amino acids delivered by tRNAs into a polypeptide chain. The nascent polypeptides leave the ribosome through a tunnel in the LSU and interact with protein factors that function in enzymatic processing, targeting, and the membrane insertion of nascent chains at the exit of the ribosomal tunnel. Plays a role in the assembly and function of the 40S ribosomal subunit. Mutations in this protein affects the control of translational fidelity. Involved in nucleolar processing of pre-18S ribosomal RNA and ribosome assembly. In Ictalurus punctatus (Channel catfish), this protein is Small ribosomal subunit protein uS5 (rps2).